The primary structure comprises 153 residues: MDQETVGNVVLLAIVTLISVVQNGFFAHKVEHESRTQNGRSFQRTGTLAFERVYTANQNCVDAYPTFLAVLWSAGLLCSQVPAAFAGLMYLLVRQKYFVGYLGERTQSTPGYIFGKRIILFLFLMSVAGIFNYYLIFFFGSDFENYIKTVTTT.

At M1–N8 the chain is on the lumenal side. A helical transmembrane segment spans residues V9–V30. At E31 to R52 the chain is on the cytoplasmic side. A helical membrane pass occupies residues V53–L77. At C78–Q80 the chain is on the lumenal side. Residues V81–L102 form a helical membrane-spanning segment. The Cytoplasmic segment spans residues G103–Q107. An intramembrane segment occupies S108–G115. Residues K116–A128 traverse the membrane as a helical segment. The Lumenal segment spans residues G129–T153.

It belongs to the MAPEG family. In terms of assembly, homotrimer. Interacts with LTC4S and ALOX5.

The protein localises to the nucleus membrane. It localises to the endoplasmic reticulum membrane. In terms of biological role, required for leukotriene biosynthesis by ALOX5 (5-lipoxygenase). Anchors ALOX5 to the membrane. Binds arachidonic acid, and could play an essential role in the transfer of arachidonic acid to ALOX5. Binds to MK-886, a compound that blocks the biosynthesis of leukotrienes. The chain is Arachidonate 5-lipoxygenase-activating protein (ALOX5AP) from Macaca mulatta (Rhesus macaque).